A 491-amino-acid chain; its full sequence is tRNA-2-methylthio-N(6)-dimethylallyladenosine synthase (491 aa).

Residues 54–172 form the MTTase N-terminal domain; that stretch reads KTYHIKTFGC…ILNLLEQVIF (119 aa). 6 residues coordinate [4Fe-4S] cluster: C63, C99, C133, C209, C213, and C216. A Radical SAM core domain is found at 195 to 426; sequence RTNNLKGFVN…NEMVKTFSKK (232 aa). Positions 429–491 constitute a TRAM domain; that stretch reads EKYVNKVLDV…RFTLNGKMID (63 aa).

It belongs to the methylthiotransferase family. MiaB subfamily. As to quaternary structure, monomer. [4Fe-4S] cluster is required as a cofactor.

It is found in the cytoplasm. It catalyses the reaction N(6)-dimethylallyladenosine(37) in tRNA + (sulfur carrier)-SH + AH2 + 2 S-adenosyl-L-methionine = 2-methylsulfanyl-N(6)-dimethylallyladenosine(37) in tRNA + (sulfur carrier)-H + 5'-deoxyadenosine + L-methionine + A + S-adenosyl-L-homocysteine + 2 H(+). Its function is as follows. Catalyzes the methylthiolation of N6-(dimethylallyl)adenosine (i(6)A), leading to the formation of 2-methylthio-N6-(dimethylallyl)adenosine (ms(2)i(6)A) at position 37 in tRNAs that read codons beginning with uridine. The polypeptide is tRNA-2-methylthio-N(6)-dimethylallyladenosine synthase (Malacoplasma penetrans (strain HF-2) (Mycoplasma penetrans)).